The following is a 389-amino-acid chain: Aminomethyltransferase (389 aa).

This sequence belongs to the GcvT family. In terms of assembly, the glycine cleavage system is composed of four proteins: P, T, L and H.

The enzyme catalyses N(6)-[(R)-S(8)-aminomethyldihydrolipoyl]-L-lysyl-[protein] + (6S)-5,6,7,8-tetrahydrofolate = N(6)-[(R)-dihydrolipoyl]-L-lysyl-[protein] + (6R)-5,10-methylene-5,6,7,8-tetrahydrofolate + NH4(+). Its function is as follows. The glycine cleavage system catalyzes the degradation of glycine. In Corynebacterium jeikeium (strain K411), this protein is Aminomethyltransferase.